We begin with the raw amino-acid sequence, 1254 residues long: AF4/FMR2 family member 3 (1254 aa).

Basic and acidic residues predominate over residues 45–62; the sequence is YEPDRNALRRKERERRSQ. 5 disordered regions span residues 45–90, 139–190, 261–324, 350–534, and 552–752; these read YEPD…GDEL, AESR…AAQQ, RPMD…GENN, EPSK…EGQD, and KTTC…SVGS. Composition is skewed to polar residues over residues 67-76 and 143-158; these read DSGSFNSGYS and AQPQ…SSTP. The span at 359 to 369 shows a compositional bias: polar residues; that stretch reads KDSQLVSSGHS. The segment covering 406-418 has biased composition (low complexity); sequence QQAAQRTALRALA. The segment covering 421–433 has biased composition (polar residues); sequence SVVQQTNCRGSAP. Positions 441 to 472 are enriched in low complexity; sequence SSSSGGSSSSSDSESTSGSDSETESSSSSSES. Positions 552–561 are enriched in basic and acidic residues; that stretch reads KTTCKEEQRP. Residues 577–605 are compositionally biased toward low complexity; that stretch reads SPPAAVAVTAAALPPAVPSAPTESAPAPT. Positions 615–633 are enriched in basic and acidic residues; the sequence is RRTERTSAGDGANCHRPEE. Low complexity-rich tracts occupy residues 694–704 and 732–749; these read TESSSSSSSSD and AASS…SRAS. Position 782 is a phosphoserine (S782). The segment at 813–883 is disordered; it reads PGVLSAPSAK…ASTNNTLSGN (71 aa). Over residues 857-869 the composition is skewed to basic and acidic residues; sequence REIKKVQGRKESA. Polar residues predominate over residues 873–883; it reads AASTNNTLSGN. S908 is subject to Phosphoserine. 2 disordered regions span residues 919 to 991 and 1128 to 1171; these read ASED…HRDC and AAQA…SGLS. Composition is skewed to polar residues over residues 922-941 and 960-985; these read DLTS…ASSN and ASHN…SPGS. Low complexity-rich tracts occupy residues 1132 to 1146 and 1154 to 1171; these read PSPW…GSPS and PASS…SGLS.

This sequence belongs to the AF4 family. Highest levels found in lymphoid tissues, lower levels in brain and lung.

It localises to the nucleus. Putative transcription activator that may function in lymphoid development and oncogenesis. The chain is AF4/FMR2 family member 3 (Aff3) from Mus musculus (Mouse).